A 37-amino-acid chain; its full sequence is MVEPLLCGIVLGLVPVTIAGLFVTAYLQYLRGDLATY.

Residues 5–25 (LLCGIVLGLVPVTIAGLFVTA) form a helical membrane-spanning segment.

This sequence belongs to the PetG family. In terms of assembly, the 4 large subunits of the cytochrome b6-f complex are cytochrome b6, subunit IV (17 kDa polypeptide, PetD), cytochrome f and the Rieske protein, while the 4 small subunits are PetG, PetL, PetM and PetN. The complex functions as a dimer.

The protein localises to the plastid. It is found in the chloroplast thylakoid membrane. Functionally, component of the cytochrome b6-f complex, which mediates electron transfer between photosystem II (PSII) and photosystem I (PSI), cyclic electron flow around PSI, and state transitions. PetG is required for either the stability or assembly of the cytochrome b6-f complex. In Chlamydomonas reinhardtii (Chlamydomonas smithii), this protein is Cytochrome b6-f complex subunit 5.